We begin with the raw amino-acid sequence, 394 residues long: Elongation factor Tu (394 aa).

The tr-type G domain maps to 10–204 (KLHINVGTIG…VLDSYIPEPK (195 aa)). The interval 19 to 26 (GHVDHGKT) is G1. Residue 19–26 (GHVDHGKT) participates in GTP binding. A Mg(2+)-binding site is contributed by threonine 26. Residues 60-64 (GITIN) are G2. Residues 81 to 84 (DCPG) form a G3 region. GTP contacts are provided by residues 81–85 (DCPGH) and 136–139 (NKCD). Positions 136-139 (NKCD) are G4. The interval 174–176 (SAL) is G5.

It belongs to the TRAFAC class translation factor GTPase superfamily. Classic translation factor GTPase family. EF-Tu/EF-1A subfamily. As to quaternary structure, monomer.

The protein localises to the cytoplasm. It carries out the reaction GTP + H2O = GDP + phosphate + H(+). GTP hydrolase that promotes the GTP-dependent binding of aminoacyl-tRNA to the A-site of ribosomes during protein biosynthesis. The chain is Elongation factor Tu from Baumannia cicadellinicola subsp. Homalodisca coagulata.